Here is a 249-residue protein sequence, read N- to C-terminus: Exosome complex component Rrp4 (249 aa).

Residues 73-144 enclose the S1 motif domain; it reads NDIVIGLVED…RSIDPVLSVK (72 aa). The KH domain occupies 154–211; that stretch reads GIVIDIMPVKVPRVIGKNKSMYETLTSKSGCSIFVANNGRIWATCPSRFSEEILIEAI.

This sequence belongs to the RRP4 family. As to quaternary structure, component of the archaeal exosome complex. Forms a trimer of Rrp4 and/or Csl4 subunits. The trimer associates with a hexameric ring-like arrangement composed of 3 Rrp41-Rrp42 heterodimers.

Its subcellular location is the cytoplasm. In terms of biological role, non-catalytic component of the exosome, which is a complex involved in RNA degradation. Increases the RNA binding and the efficiency of RNA degradation. Confers strong poly(A) specificity to the exosome. The sequence is that of Exosome complex component Rrp4 from Saccharolobus solfataricus (strain ATCC 35092 / DSM 1617 / JCM 11322 / P2) (Sulfolobus solfataricus).